Here is a 436-residue protein sequence, read N- to C-terminus: 3-ketoacyl-CoA thiolase (436 aa).

Residue C99 is the Acyl-thioester intermediate of the active site. Active-site proton acceptor residues include H392 and C422.

It belongs to the thiolase-like superfamily. Thiolase family. Heterotetramer of two alpha chains (FadJ) and two beta chains (FadI).

It is found in the cytoplasm. The enzyme catalyses an acyl-CoA + acetyl-CoA = a 3-oxoacyl-CoA + CoA. It functions in the pathway lipid metabolism; fatty acid beta-oxidation. Its function is as follows. Catalyzes the final step of fatty acid oxidation in which acetyl-CoA is released and the CoA ester of a fatty acid two carbons shorter is formed. The sequence is that of 3-ketoacyl-CoA thiolase from Photobacterium profundum (strain SS9).